Reading from the N-terminus, the 24-residue chain is Small ribosomal subunit protein uS19 (24 aa).

The interval 1 to 24 (KLGEFSPTRTYRGHNKKDKKMQKK) is disordered. The segment covering 11 to 24 (YRGHNKKDKKMQKK) has biased composition (basic residues).

It belongs to the universal ribosomal protein uS19 family.

Protein S19 forms a complex with S13 that binds strongly to the 16S ribosomal RNA. The polypeptide is Small ribosomal subunit protein uS19 (Phytoplasma sp. (strain STRAWB2)).